Reading from the N-terminus, the 439-residue chain is UDP-N-acetylmuramoylalanine--D-glutamate ligase (439 aa).

116–122 (GSNGKTT) contacts ATP.

Belongs to the MurCDEF family.

It localises to the cytoplasm. The catalysed reaction is UDP-N-acetyl-alpha-D-muramoyl-L-alanine + D-glutamate + ATP = UDP-N-acetyl-alpha-D-muramoyl-L-alanyl-D-glutamate + ADP + phosphate + H(+). It participates in cell wall biogenesis; peptidoglycan biosynthesis. Functionally, cell wall formation. Catalyzes the addition of glutamate to the nucleotide precursor UDP-N-acetylmuramoyl-L-alanine (UMA). This is UDP-N-acetylmuramoylalanine--D-glutamate ligase from Shewanella oneidensis (strain ATCC 700550 / JCM 31522 / CIP 106686 / LMG 19005 / NCIMB 14063 / MR-1).